Reading from the N-terminus, the 100-residue chain is Small ribosomal subunit protein uS14c (100 aa).

The protein belongs to the universal ribosomal protein uS14 family. As to quaternary structure, part of the 30S ribosomal subunit.

Its subcellular location is the plastid. It localises to the chloroplast. Its function is as follows. Binds 16S rRNA, required for the assembly of 30S particles. This Olimarabidopsis pumila (Dwarf rocket) protein is Small ribosomal subunit protein uS14c.